The chain runs to 148 residues: Cathelicidin-1 (148 aa).

The first 17 residues, 1 to 17 (MLSCWVLLLALLGGACA), serve as a signal peptide directing secretion. Positions 18–122 (LPAPLGYSQA…TCVDSMADPV (105 aa)) are excised as a propeptide. Intrachain disulfides connect C75–C86 and C97–C114.

It belongs to the cathelicidin family. As to expression, detected in gizzard, liver, small intestine, large intestine, cloaca, bursa of Fabricius, gall bladder, lung, trachea, kidney, testis and bone marrow.

Its subcellular location is the secreted. Binds bacterial lipopolysaccharide (LPS). Has potent antimicrobial activity against Gram-positive and Gram-negative bacteria (in vitro). Has hemolytic activity (in vitro). May play a role in the innate immune response. The chain is Cathelicidin-1 (CATHL1) from Gallus gallus (Chicken).